Here is a 384-residue protein sequence, read N- to C-terminus: Zinc finger protein GLIS2 homolog (384 aa).

A C2H2-type 1 zinc finger spans residues 128–153; the sequence is FVCNWTDCDRVFDTLDALAQHVTQRH. Residues 163 to 190 form a C2H2-type 2; degenerate zinc finger; it reads YYCRWRGCQRSERGFNARYKMLVHTRTH. 3 C2H2-type zinc fingers span residues 196–218, 224–248, and 254–280; these read HRCH…IRSH, YKCS…TRTH, and YMCK…TFKH. The tract at residues 321 to 343 is disordered; that stretch reads SSSSARYYDDSNNEPSDYSLKPK.

It belongs to the GLI C2H2-type zinc-finger protein family.

The protein localises to the nucleus. Its function is as follows. Transcription factor which represses a set of lipase genes involved in fat catabolism. This Drosophila melanogaster (Fruit fly) protein is Zinc finger protein GLIS2 homolog (sug).